The chain runs to 525 residues: Nuclear polyadenylated RNA-binding protein NAB2 (525 aa).

Disordered regions lie at residues 102–160 and 196–236; these read SDIA…QLQP and QFAP…STRF. The segment covering 103-160 has biased composition (low complexity); sequence DIAQQQQQQQQQQQPDIAQQQPQQQPQQQPQQQPQQQPQQQPQQQPQQQPQQQPQLQP. A run of 9 repeats spans residues 121-124, 125-128, 129-132, 133-136, 137-140, 141-144, 145-148, 149-152, and 153-156. Residues 121–156 are 10 X 4 AA tandem repeats of Q-Q-Q-P; sequence QQQPQQQPQQQPQQQPQQQPQQQPQQQPQQQPQQQP. The 10; approximate repeat unit spans residues 157 to 160; that stretch reads QLQP. Residues Arg209 and Arg222 each carry the omega-N-methylarginine modification. The segment at 209-228 is RNA-binding RGG-box; sequence RGGGAVGKNRRGGRGGNRGG. Positions 209-239 are PY-NLS nuclear localization signal; sequence RGGGAVGKNRRGGRGGNRGGRNNNSTRFNPL. The residue at position 254 (Thr254) is a Phosphothreonine. 7 consecutive C3H1-type zinc fingers follow at residues 262–278, 283–300, 340–355, 371–386, 415–430, 437–452, and 458–473; these read CRLF…PHAH, CNEY…EFLH, CKFG…PFGH, CDKN…RKAH, CKFG…KYRH, CREG…LFGH, and CRFG…LFRH. The disordered stretch occupies residues 503 to 525; it reads NAIIENAPPQTSFTHQEQDTEMN. Residues 510-525 are compositionally biased toward polar residues; the sequence is PPQTSFTHQEQDTEMN.

The protein belongs to the ZC3H14 family. Interacts with MLP1. Interacts with PUB1. Methylated by HMT1.

Its subcellular location is the nucleus. It localises to the cytoplasm. Its function is as follows. RNA-binding protein involved in RNA processing and transcription regulation. Acts as a regulator of mRNA stability: binds the poly(A) tail of mRNAs and pre-mRNAs, preventing their degradation by the exosome. Involved in the biogenesis of circular RNAs (circRNAs) which are produced by back-splicing circularization of pre-mRNAs. Involved in mRNA poly(A) tail length control and nuclear export. Functions in surveillance and the packaging leading to generation of export-competent mRNPs. Controls both mRNP compaction that facilitates movement through nuclear pore complexes and the length of transcript poly(A) tails. Also acts as a regulator of transcription. Associates directly with nascent RNA polymerase II transcripts and remains associated during subsequent nuclear RNA processing reactions. Required for RNA polymerase III (RNAPIII) transcription: required for the occupancy of RNAPIII and Transcription factor IIIB (TFIIIB) at target genes, possibly via direct association with nascent RNAPIII transcripts. This chain is Nuclear polyadenylated RNA-binding protein NAB2, found in Saccharomyces cerevisiae (strain ATCC 204508 / S288c) (Baker's yeast).